A 671-amino-acid polypeptide reads, in one-letter code: UvrABC system protein B (671 aa).

The Helicase ATP-binding domain maps to 25–412 (EGIDAGLAHQ…AGRVVEQVVR (388 aa)). 38-45 (GVTGSGKT) is a binding site for ATP. The Beta-hairpin motif lies at 91 to 114 (YYDYYQPEAYVPSSDTFIEKDASI). Residues 429–595 (QVDDLLSEIH…GVFKDVADIM (167 aa)) enclose the Helicase C-terminal domain. The tract at residues 600-624 (VPGSRSKKRKGMAKAAEENARYENE) is disordered. The segment covering 614-624 (AAEENARYENE) has biased composition (basic and acidic residues). The UVR domain occupies 632-667 (NKRIRQLEEKMYQLARDLEFEAAAQMRDEIGKLRER).

Belongs to the UvrB family. In terms of assembly, forms a heterotetramer with UvrA during the search for lesions. Interacts with UvrC in an incision complex.

It localises to the cytoplasm. The UvrABC repair system catalyzes the recognition and processing of DNA lesions. A damage recognition complex composed of 2 UvrA and 2 UvrB subunits scans DNA for abnormalities. Upon binding of the UvrA(2)B(2) complex to a putative damaged site, the DNA wraps around one UvrB monomer. DNA wrap is dependent on ATP binding by UvrB and probably causes local melting of the DNA helix, facilitating insertion of UvrB beta-hairpin between the DNA strands. Then UvrB probes one DNA strand for the presence of a lesion. If a lesion is found the UvrA subunits dissociate and the UvrB-DNA preincision complex is formed. This complex is subsequently bound by UvrC and the second UvrB is released. If no lesion is found, the DNA wraps around the other UvrB subunit that will check the other stand for damage. In Pseudomonas savastanoi pv. phaseolicola (strain 1448A / Race 6) (Pseudomonas syringae pv. phaseolicola (strain 1448A / Race 6)), this protein is UvrABC system protein B.